We begin with the raw amino-acid sequence, 233 residues long: Large ribosomal subunit protein uL1 (233 aa).

Belongs to the universal ribosomal protein uL1 family. In terms of assembly, part of the 50S ribosomal subunit.

Binds directly to 23S rRNA. The L1 stalk is quite mobile in the ribosome, and is involved in E site tRNA release. Functionally, protein L1 is also a translational repressor protein, it controls the translation of the L11 operon by binding to its mRNA. This Syntrophomonas wolfei subsp. wolfei (strain DSM 2245B / Goettingen) protein is Large ribosomal subunit protein uL1.